A 278-amino-acid chain; its full sequence is Neuronal membrane glycoprotein M6-a (278 aa).

At methionine 1 the chain carries N-acetylmethionine. The Cytoplasmic segment spans residues 1–22; the sequence is MEENMEEGQTQKGCFECCIKCL. A helical transmembrane segment spans residues 23–43; it reads GGIPYASLIATILLYAGVALF. The Extracellular segment spans residues 44–84; the sequence is CGCGHEALSGTVNILQTYFELARTAGDTLDVFTMIDIFKYV. A helical transmembrane segment spans residues 85–105; sequence IYGIAAAFFVYGILLMVEGFF. At 106–127 the chain is on the cytoplasmic side; the sequence is TTGAIKDLYGDFKITTCGRCVS. Residues 128–148 traverse the membrane as a helical segment; it reads AWFIMLTYLFMLAWLGVTAFT. At 149–213 the chain is on the extracellular side; it reads SLPVYMYFNV…STELNMTFHL (65 aa). Asparagine 164 carries N-linked (GlcNAc...) asparagine glycosylation. A disulfide bridge connects residues cysteine 174 and cysteine 192. Asparagine 208 carries an N-linked (GlcNAc...) asparagine glycan. The helical transmembrane segment at 214-234 threads the bilayer; that stretch reads FIVALAGAGAAVIAMVHYLMV. Residues 235-278 lie on the Cytoplasmic side of the membrane; the sequence is LSANWAYVKDACRMQKYEDIKSKEEQELHDIHSTRSKERLNAYT. Residue serine 256 is modified to Phosphoserine. Phosphothreonine is present on threonine 278.

Belongs to the myelin proteolipid protein family. As to quaternary structure, interacts with OPRM1. Interacts with palmitoyltransferase ZDHHC17/HIP14; the interaction leads to palmitoylation of GPM6A. N-glycosylated. In terms of processing, palmitoylated by ZDHHC17/HIP14. As to expression, widely expressed in the CNS. Found especially in the granule cell layer of the cerebellum but not in the molecular layer or white matter. Expressed in the immature embryonic retina including the nerve fiber layer (NFL), inner plexiform layer (IPL), and outer plexiform layer (OPL). Weakly expressed in processes of Mueller glia cells.

The protein localises to the cell membrane. The protein resides in the cell projection. It is found in the axon. Its subcellular location is the growth cone. It localises to the dendritic spine. The protein localises to the filopodium. The protein resides in the neuron projection. Involved in neuronal differentiation, including differentiation and migration of neuronal stem cells. Plays a role in neuronal plasticity and is involved in neurite and filopodia outgrowth, filopodia motility and probably synapse formation. Gpm6a-induced filopodia formation involves mitogen-activated protein kinase (MAPK) and Src signaling pathways. Conflictingly, PubMed:22162747 reports that induced cellular protrusions are simple membrane-wrapped tubules without actin or tubulin-based cytoskeletons and with Gpm6a gliding along membrane edges indicative for a function in actin-independent membrane deformation. May be involved in neuronal NGF-dependent Ca(2+) influx. May be involved in regulation of endocytosis and intracellular trafficking of G-protein-coupled receptors (GPCRs); enhances internalization and recycling of mu-type opioid receptor. The polypeptide is Neuronal membrane glycoprotein M6-a (Gpm6a) (Mus musculus (Mouse)).